The primary structure comprises 484 residues: tRNA-2-methylthio-N(6)-dimethylallyladenosine synthase (484 aa).

The MTTase N-terminal domain maps to 36-153; the sequence is GKLYIKTHGC…LPELIRARRE (118 aa). [4Fe-4S] cluster is bound by residues cysteine 45, cysteine 82, cysteine 116, cysteine 190, cysteine 194, and cysteine 197. One can recognise a Radical SAM core domain in the interval 176–415; it reads RAEGPSAFVS…HISAHAASIS (240 aa). Residues 416 to 479 enclose the TRAM domain; it reads QSMVGSVQRV…SNSLRGRIQL (64 aa). The tract at residues 428-450 is disordered; it reads EGPSRRDPNELTGKSENMRPVNF.

The protein belongs to the methylthiotransferase family. MiaB subfamily. In terms of assembly, monomer. [4Fe-4S] cluster serves as cofactor.

The protein localises to the cytoplasm. The catalysed reaction is N(6)-dimethylallyladenosine(37) in tRNA + (sulfur carrier)-SH + AH2 + 2 S-adenosyl-L-methionine = 2-methylsulfanyl-N(6)-dimethylallyladenosine(37) in tRNA + (sulfur carrier)-H + 5'-deoxyadenosine + L-methionine + A + S-adenosyl-L-homocysteine + 2 H(+). Its function is as follows. Catalyzes the methylthiolation of N6-(dimethylallyl)adenosine (i(6)A), leading to the formation of 2-methylthio-N6-(dimethylallyl)adenosine (ms(2)i(6)A) at position 37 in tRNAs that read codons beginning with uridine. In Xanthomonas oryzae pv. oryzae (strain KACC10331 / KXO85), this protein is tRNA-2-methylthio-N(6)-dimethylallyladenosine synthase.